The following is a 727-amino-acid chain: Polyribonucleotide nucleotidyltransferase (727 aa).

Mg(2+) is bound by residues Asp-488 and Asp-494. Residues 555–614 enclose the KH domain; it reads PKLYTMKINPEKIRDVIGKGGATIRALTDETGCQINIEEDGTITIAATEAAKADEAKRRI. In terms of domain architecture, S1 motif spans 624-692; that stretch reads GKVYEGPVTK…DKGRVKLSMK (69 aa). The tract at residues 691–727 is disordered; that stretch reads MKALADRPAGDSGRPAPAERGERRERRDGGASEQQQQ. The segment covering 707 to 720 has biased composition (basic and acidic residues); that stretch reads PAERGERRERRDGG.

The protein belongs to the polyribonucleotide nucleotidyltransferase family. It depends on Mg(2+) as a cofactor.

It is found in the cytoplasm. The enzyme catalyses RNA(n+1) + phosphate = RNA(n) + a ribonucleoside 5'-diphosphate. Its function is as follows. Involved in mRNA degradation. Catalyzes the phosphorolysis of single-stranded polyribonucleotides processively in the 3'- to 5'-direction. The chain is Polyribonucleotide nucleotidyltransferase from Acidovorax ebreus (strain TPSY) (Diaphorobacter sp. (strain TPSY)).